We begin with the raw amino-acid sequence, 597 residues long: Dictomallein-3 (597 aa).

A signal peptide spans 1-19 (MKLILILIFLFSCILFINC). Residues 148–409 (PDVGQDYTLK…QNYFKNSIYY (262 aa)) form the Peptidase M66 domain. Histidine 301 lines the Zn(2+) pocket. Residue glutamate 302 is part of the active site. Residues histidine 305 and histidine 311 each coordinate Zn(2+).

Belongs to the dictomallein family. Zn(2+) is required as a cofactor.

The protein localises to the secreted. This is Dictomallein-3 (dtmlC) from Dictyostelium discoideum (Social amoeba).